The chain runs to 191 residues: Peptidyl-tRNA hydrolase (191 aa).

Y17 contributes to the tRNA binding site. H22 functions as the Proton acceptor in the catalytic mechanism. TRNA is bound by residues Y68, N70, and N116.

It belongs to the PTH family. Monomer.

Its subcellular location is the cytoplasm. The enzyme catalyses an N-acyl-L-alpha-aminoacyl-tRNA + H2O = an N-acyl-L-amino acid + a tRNA + H(+). Functionally, hydrolyzes ribosome-free peptidyl-tRNAs (with 1 or more amino acids incorporated), which drop off the ribosome during protein synthesis, or as a result of ribosome stalling. Its function is as follows. Catalyzes the release of premature peptidyl moieties from peptidyl-tRNA molecules trapped in stalled 50S ribosomal subunits, and thus maintains levels of free tRNAs and 50S ribosomes. The sequence is that of Peptidyl-tRNA hydrolase from Francisella tularensis subsp. mediasiatica (strain FSC147).